Consider the following 147-residue polypeptide: MTIVCELESGADLPEYATEGASGADLRAHIEEPIAVLPGQRVLIPTGIKMQIPQGYEVQVRPRSGLALKHGIMVVNSPGTIDADYRGEVCIILANFGESTFIIEPKMRIAQAVVAPVVQAKFIVVDQEEGLTATSRGSRGFGHTGEK.

Residues 63 to 65 (RSG), N76, and 80 to 82 (TID) each bind substrate.

Belongs to the dUTPase family. Mg(2+) serves as cofactor.

The enzyme catalyses dUTP + H2O = dUMP + diphosphate + H(+). The protein operates within pyrimidine metabolism; dUMP biosynthesis; dUMP from dCTP (dUTP route): step 2/2. This enzyme is involved in nucleotide metabolism: it produces dUMP, the immediate precursor of thymidine nucleotides and it decreases the intracellular concentration of dUTP so that uracil cannot be incorporated into DNA. This is Deoxyuridine 5'-triphosphate nucleotidohydrolase from Chlamydia caviae (strain ATCC VR-813 / DSM 19441 / 03DC25 / GPIC) (Chlamydophila caviae).